Consider the following 242-residue polypeptide: Biosynthetic peptidoglycan transglycosylase (242 aa).

The helical transmembrane segment at 19-39 threads the bilayer; sequence ILAALAVFWGGGIALFSVVPV.

Belongs to the glycosyltransferase 51 family.

The protein localises to the cell inner membrane. It carries out the reaction [GlcNAc-(1-&gt;4)-Mur2Ac(oyl-L-Ala-gamma-D-Glu-L-Lys-D-Ala-D-Ala)](n)-di-trans,octa-cis-undecaprenyl diphosphate + beta-D-GlcNAc-(1-&gt;4)-Mur2Ac(oyl-L-Ala-gamma-D-Glu-L-Lys-D-Ala-D-Ala)-di-trans,octa-cis-undecaprenyl diphosphate = [GlcNAc-(1-&gt;4)-Mur2Ac(oyl-L-Ala-gamma-D-Glu-L-Lys-D-Ala-D-Ala)](n+1)-di-trans,octa-cis-undecaprenyl diphosphate + di-trans,octa-cis-undecaprenyl diphosphate + H(+). The protein operates within cell wall biogenesis; peptidoglycan biosynthesis. Its function is as follows. Peptidoglycan polymerase that catalyzes glycan chain elongation from lipid-linked precursors. The protein is Biosynthetic peptidoglycan transglycosylase of Salmonella heidelberg (strain SL476).